The following is a 242-amino-acid chain: MSVFFVTGTDTSVGKTIVSRAIIQAMQNAGIQIVGYKPLACGQDDPVYTDVQESGQTDYDNMDNRDVLVLQDSTNEEVSYQDINSYTFAHTMPMLSQEGKHIDINKINTDLKRLSSRYQSVLVEGSFGWLTPINQDYTFASWAAEHKMPVVLVVGIKEGCMNHALLTVQSIEQMGLPLLGWVANRINPMLGHYAEIIEDLSKRIKAPLLGKIPYMHKPETQELGHYITDIDRLSYMKTEILK.

ATP is bound at residue 12-17; the sequence is SVGKTI. Threonine 16 provides a ligand contact to Mg(2+). The active site involves lysine 37. Aspartate 66 is a binding site for ATP. Residues aspartate 66 and glutamate 124 each coordinate Mg(2+). 184–185 is a binding site for ATP; that stretch reads NR.

It belongs to the dethiobiotin synthetase family. As to quaternary structure, homodimer. Mg(2+) serves as cofactor.

The protein localises to the cytoplasm. It catalyses the reaction (7R,8S)-7,8-diammoniononanoate + CO2 + ATP = (4R,5S)-dethiobiotin + ADP + phosphate + 3 H(+). It participates in cofactor biosynthesis; biotin biosynthesis; biotin from 7,8-diaminononanoate: step 1/2. In terms of biological role, catalyzes a mechanistically unusual reaction, the ATP-dependent insertion of CO2 between the N7 and N8 nitrogen atoms of 7,8-diaminopelargonic acid (DAPA, also called 7,8-diammoniononanoate) to form a ureido ring. This is ATP-dependent dethiobiotin synthetase BioD from Mannheimia succiniciproducens (strain KCTC 0769BP / MBEL55E).